The sequence spans 69 residues: Large ribosomal subunit protein uL29 (69 aa).

This sequence belongs to the universal ribosomal protein uL29 family.

This is Large ribosomal subunit protein uL29 from Granulibacter bethesdensis (strain ATCC BAA-1260 / CGDNIH1).